The primary structure comprises 248 residues: uncharacterized protein (248 aa).

The next 6 membrane-spanning stretches (helical) occupy residues 65–85 (IIIY…QFLT), 105–125 (SITS…ILWY), 126–146 (ISWT…LGFI), 156–176 (LCCF…TLLI), 188–208 (LILN…SDYS), and 222–242 (VIYI…YKYT).

It localises to the cell membrane. This is an uncharacterized protein from Rickettsia prowazekii (strain Madrid E).